The sequence spans 101 residues: Protein S100-A7 (101 aa).

N-acetylserine is present on S2. 2 consecutive EF-hand domains span residues 8 to 42 (QAIT…NFPN) and 50 to 85 (RGRD…IATD). Positions 18 and 25 each coordinate Zn(2+). Ca(2+)-binding residues include D63, N65, D67, K69, and E74. Residues H87 and H91 each contribute to the Zn(2+) site.

This sequence belongs to the S-100 family. As to quaternary structure, interacts with RANBP9.

It localises to the cytoplasm. Its subcellular location is the secreted. The protein is Protein S100-A7 (S100A7) of Bos taurus (Bovine).